The sequence spans 129 residues: MYDNLKSLGITNPDDIDRYSLRQEANNDILKIYFRKDKGEFFAKSVKFKYPRQRKTIVADNSGQGYKEINEISPNLRYVIDELDKICQQEQVEVDLKRKILDDLRHLESVVSHKITEIEADLEKLTKNR.

Belongs to the UPF0325 family.

The sequence is that of UPF0325 protein ECA1027 from Pectobacterium atrosepticum (strain SCRI 1043 / ATCC BAA-672) (Erwinia carotovora subsp. atroseptica).